The following is a 157-amino-acid chain: Transcriptional repressor NrdR (157 aa).

The interval 1 to 21 is disordered; the sequence is MRCPYCSSEDSQVKDSRPAED. A zinc finger spans residues 3–34; it reads CPYCSSEDSQVKDSRPAEDGNAIRRRRICPDC. Basic and acidic residues predominate over residues 11-21; that stretch reads SQVKDSRPAED. The 91-residue stretch at 49–139 folds into the ATP-cone domain; sequence LMIIKKTGRK…VYRDFSHAED (91 aa).

This sequence belongs to the NrdR family. Zn(2+) is required as a cofactor.

Its function is as follows. Negatively regulates transcription of bacterial ribonucleotide reductase nrd genes and operons by binding to NrdR-boxes. In Sinorhizobium fredii (strain NBRC 101917 / NGR234), this protein is Transcriptional repressor NrdR.